The sequence spans 361 residues: Beta-hexosaminidase (361 aa).

Residues D69, R77, R144, and 174 to 175 contribute to the substrate site; that span reads KH. H187 acts as the Proton donor/acceptor in catalysis. D258 functions as the Nucleophile in the catalytic mechanism.

Belongs to the glycosyl hydrolase 3 family. NagZ subfamily.

The protein resides in the cytoplasm. The enzyme catalyses Hydrolysis of terminal non-reducing N-acetyl-D-hexosamine residues in N-acetyl-beta-D-hexosaminides.. The protein operates within cell wall biogenesis; peptidoglycan recycling. In terms of biological role, plays a role in peptidoglycan recycling by cleaving the terminal beta-1,4-linked N-acetylglucosamine (GlcNAc) from peptide-linked peptidoglycan fragments, giving rise to free GlcNAc, anhydro-N-acetylmuramic acid and anhydro-N-acetylmuramic acid-linked peptides. The protein is Beta-hexosaminidase of Neisseria gonorrhoeae (strain ATCC 700825 / FA 1090).